Reading from the N-terminus, the 150-residue chain is Deoxyuridine 5'-triphosphate nucleotidohydrolase (150 aa).

Residues 69–71, Asn82, 86–88, and Lys96 contribute to the substrate site; these read RSG and LID.

The protein belongs to the dUTPase family. Mg(2+) is required as a cofactor.

It catalyses the reaction dUTP + H2O = dUMP + diphosphate + H(+). Its pathway is pyrimidine metabolism; dUMP biosynthesis; dUMP from dCTP (dUTP route): step 2/2. In terms of biological role, this enzyme is involved in nucleotide metabolism: it produces dUMP, the immediate precursor of thymidine nucleotides and it decreases the intracellular concentration of dUTP so that uracil cannot be incorporated into DNA. This chain is Deoxyuridine 5'-triphosphate nucleotidohydrolase, found in Neisseria gonorrhoeae (strain ATCC 700825 / FA 1090).